Consider the following 42-residue polypeptide: Photosystem I reaction center subunit IX (42 aa).

A helical membrane pass occupies residues 7 to 27 (YLSTAPVLATLWFGFLAGLLI).

This sequence belongs to the PsaJ family.

Its subcellular location is the plastid. It is found in the chloroplast thylakoid membrane. Functionally, may help in the organization of the PsaE and PsaF subunits. In Huperzia lucidula (Shining clubmoss), this protein is Photosystem I reaction center subunit IX.